The chain runs to 171 residues: Inosine/xanthosine triphosphatase (171 aa).

8 to 13 (TTNPAK) is a binding site for substrate. Glutamate 38 is a Mg(2+) binding site.

The protein belongs to the YjjX NTPase family. In terms of assembly, homodimer. Mg(2+) is required as a cofactor. Requires Mn(2+) as cofactor.

The catalysed reaction is XTP + H2O = XDP + phosphate + H(+). It catalyses the reaction ITP + H2O = IDP + phosphate + H(+). In terms of biological role, phosphatase that hydrolyzes non-canonical purine nucleotides such as XTP and ITP to their respective diphosphate derivatives. Probably excludes non-canonical purines from DNA/RNA precursor pool, thus preventing their incorporation into DNA/RNA and avoiding chromosomal lesions. The sequence is that of Inosine/xanthosine triphosphatase from Klebsiella pneumoniae (strain 342).